The following is a 63-amino-acid chain: Large ribosomal subunit protein bL32 (63 aa).

Residues 1-20 form a disordered region; sequence MANPKAKMSKSRRDKRRAQF. The span at 7–18 shows a compositional bias: basic residues; that stretch reads KMSKSRRDKRRA.

Belongs to the bacterial ribosomal protein bL32 family.

The protein is Large ribosomal subunit protein bL32 of Chlorobaculum parvum (strain DSM 263 / NCIMB 8327) (Chlorobium vibrioforme subsp. thiosulfatophilum).